Consider the following 378-residue polypeptide: Alcohol dehydrogenase 1 (378 aa).

Cys48 is a Zn(2+) binding site. 49–53 is a binding site for NAD(+); sequence HTDVL. Zn(2+) contacts are provided by His69, Cys99, Cys102, Cys105, Cys113, and Cys177. Residues 202–207, Asp226, Lys231, 274–276, 297–299, and 321–323 each bind NAD(+); these read GIGTVG, TGV, IGA, and TAF.

This sequence belongs to the zinc-containing alcohol dehydrogenase family. Class-IV subfamily. As to quaternary structure, homodimer. Requires Zn(2+) as cofactor. Present in non-glandular trichome cells.

It is found in the nucleus. The protein localises to the cytoplasm. It localises to the cytosol. The enzyme catalyses (+)-artemisinic alcohol + NAD(+) = (+)-artemisinic aldehyde + NADH + H(+). It participates in sesquiterpene biosynthesis. Functionally, involved in the biosynthesis of the antimalarial endoperoxide artemisinin. Catalyzes the conversion of artemisinic alcohol into artemisinic aldehyde. This Artemisia annua (Sweet wormwood) protein is Alcohol dehydrogenase 1.